The following is a 470-amino-acid chain: Arginine ADP-riboxanase OspC1 (470 aa).

The NAD(+) site is built by His138, Gln139, Ser140, Leu144, Ile157, Asn167, Phe183, His201, Phe206, Asp226, and Glu320. Glu320 is a catalytic residue. ANK repeat units follow at residues 363 to 392, 399 to 431, and 438 to 467; these read IALQ…ITRQ, HELY…DVNT, and SGDC…TSDN.

Belongs to the OspC family. As to quaternary structure, interacts with host calmodulin (CALM1, CALM2 and/or CALM3); specifically interacts with the apo form of calmodulin, preventing calcium-binding.

The protein localises to the secreted. The protein resides in the host nucleus. It carries out the reaction L-arginyl-[protein] + NAD(+) = ADP-riboxanated L-argininyl-[protein] + nicotinamide + NH4(+) + H(+). Functionally, ADP-riboxanase effector that mediates arginine ADP-riboxanation of host caspases. ADP-riboxanation of host apoptotic caspases (CASP3, CASP8 and CASP9) prevents their activation, thereby inhibiting host cell extrinsic and intrinsic apoptosis. Does not catalyze ADP-riboxanation of host CASP4/CASP11. Independently of its ADP-riboxanase activity, acts as an inhibitor of calcium signaling by inhibiting host calmodulin, preventing activation of the JAK-STAT signaling pathway in response to interferon-beta. Mechanistically, acts by binding to the apo form of calmodulin, preventing calcium-binding and ability to activate host CaMK2 (CAMKII), which is required to stimulate the JAK-STAT signaling pathway in response to interferon-beta. The polypeptide is Arginine ADP-riboxanase OspC1 (Shigella flexneri).